The primary structure comprises 616 residues: UvrABC system protein C (616 aa).

The 79-residue stretch at 21–99 (HQPGVYRMYD…IKLYLPKYNV (79 aa)) folds into the GIY-YIG domain. In terms of domain architecture, UVR spans 209–244 (RQVIASLVEKMEQASQSLNFEQAATFRDQIQALRRV).

The protein belongs to the UvrC family. Interacts with UvrB in an incision complex.

It is found in the cytoplasm. Its function is as follows. The UvrABC repair system catalyzes the recognition and processing of DNA lesions. UvrC both incises the 5' and 3' sides of the lesion. The N-terminal half is responsible for the 3' incision and the C-terminal half is responsible for the 5' incision. The sequence is that of UvrABC system protein C from Photobacterium profundum (strain SS9).